Here is a 372-residue protein sequence, read N- to C-terminus: tRNA-specific 2-thiouridylase MnmA (372 aa).

Residues glycine 7–serine 14 and methionine 33 each bind ATP. Positions asparagine 104–aspartate 106 are interaction with target base in tRNA. Cysteine 109 serves as the catalytic Nucleophile. Cysteine 109 and cysteine 202 are oxidised to a cystine. Glycine 134 lines the ATP pocket. Residues lysine 152 to glutamine 154 form an interaction with tRNA region. Cysteine 202 functions as the Cysteine persulfide intermediate in the catalytic mechanism. Residues arginine 310–tyrosine 311 are interaction with tRNA.

It belongs to the MnmA/TRMU family.

The protein resides in the cytoplasm. It catalyses the reaction S-sulfanyl-L-cysteinyl-[protein] + uridine(34) in tRNA + AH2 + ATP = 2-thiouridine(34) in tRNA + L-cysteinyl-[protein] + A + AMP + diphosphate + H(+). Its function is as follows. Catalyzes the 2-thiolation of uridine at the wobble position (U34) of tRNA, leading to the formation of s(2)U34. The sequence is that of tRNA-specific 2-thiouridylase MnmA from Mesomycoplasma hyopneumoniae (strain 232) (Mycoplasma hyopneumoniae).